The primary structure comprises 257 residues: Dihydroorotate dehydrogenase B (NAD(+)), electron transfer subunit (257 aa).

One can recognise an FAD-binding FR-type domain in the interval 2-100 (ILIEDLTVVS…MGPQGNGFDI (99 aa)). FAD-binding positions include 51-54 (RPIS), 68-70 (VYR), and 75-76 (GT). Positions 220, 225, 228, and 244 each coordinate [2Fe-2S] cluster.

This sequence belongs to the PyrK family. Heterotetramer of 2 PyrK and 2 PyrD type B subunits. It depends on [2Fe-2S] cluster as a cofactor. FAD is required as a cofactor.

It participates in pyrimidine metabolism; UMP biosynthesis via de novo pathway; orotate from (S)-dihydroorotate (NAD(+) route): step 1/1. Functionally, responsible for channeling the electrons from the oxidation of dihydroorotate from the FMN redox center in the PyrD type B subunit to the ultimate electron acceptor NAD(+). In Streptococcus thermophilus (strain ATCC BAA-491 / LMD-9), this protein is Dihydroorotate dehydrogenase B (NAD(+)), electron transfer subunit.